A 194-amino-acid chain; its full sequence is 3-isopropylmalate dehydratase small subunit (194 aa).

It belongs to the LeuD family. LeuD type 1 subfamily. In terms of assembly, heterodimer of LeuC and LeuD.

It catalyses the reaction (2R,3S)-3-isopropylmalate = (2S)-2-isopropylmalate. Its pathway is amino-acid biosynthesis; L-leucine biosynthesis; L-leucine from 3-methyl-2-oxobutanoate: step 2/4. Its function is as follows. Catalyzes the isomerization between 2-isopropylmalate and 3-isopropylmalate, via the formation of 2-isopropylmaleate. In Halalkalibacterium halodurans (strain ATCC BAA-125 / DSM 18197 / FERM 7344 / JCM 9153 / C-125) (Bacillus halodurans), this protein is 3-isopropylmalate dehydratase small subunit.